Consider the following 218-residue polypeptide: Probable transaldolase 2 (218 aa).

K83 serves as the catalytic Schiff-base intermediate with substrate.

It belongs to the transaldolase family. Type 3B subfamily.

It is found in the cytoplasm. The enzyme catalyses D-sedoheptulose 7-phosphate + D-glyceraldehyde 3-phosphate = D-erythrose 4-phosphate + beta-D-fructose 6-phosphate. Its pathway is carbohydrate degradation; pentose phosphate pathway; D-glyceraldehyde 3-phosphate and beta-D-fructose 6-phosphate from D-ribose 5-phosphate and D-xylulose 5-phosphate (non-oxidative stage): step 2/3. Transaldolase is important for the balance of metabolites in the pentose-phosphate pathway. This chain is Probable transaldolase 2, found in Listeria innocua serovar 6a (strain ATCC BAA-680 / CLIP 11262).